We begin with the raw amino-acid sequence, 270 residues long: MLNYMERSKHQQFPFHLVNPSPWPIVVSFSLLSLALSLGLTMHGYIGEMYLVNLALLVVLGSGVLWFRDIIAEATYLGDHTAAVRKGINIGFLLFVLSEVLIFSALFWSYFHSAMSPDVTLGACWPPVGITAVQPTELPLLNTIILLASGATVTYSHHALIQGNRKNSLSGLLITTWLIIIFVICQYIEYTNATFTISDGVYGSVFFAGTGLHFLHMVMLAIMLAVCYWRLRNYHLTNSHHVGYETTIIYLHVLDVIWLFLYIVFYWWGV.

Helical transmembrane passes span 22 to 42, 46 to 66, 88 to 108, 128 to 148, 168 to 188, 205 to 225, and 248 to 268; these read PWPI…GLTM, IGEM…GVLW, INIG…ALFW, VGIT…ILLA, SLSG…CQYI, VFFA…IMLA, and IIYL…FYWW.

It belongs to the cytochrome c oxidase subunit 3 family. As to quaternary structure, component of the cytochrome c oxidase (complex IV, CIV), a multisubunit enzyme composed of a catalytic core of 3 subunits and several supernumerary subunits. The complex exists as a monomer or a dimer and forms supercomplexes (SCs) in the inner mitochondrial membrane with ubiquinol-cytochrome c oxidoreductase (cytochrome b-c1 complex, complex III, CIII).

It localises to the mitochondrion inner membrane. It carries out the reaction 4 Fe(II)-[cytochrome c] + O2 + 8 H(+)(in) = 4 Fe(III)-[cytochrome c] + 2 H2O + 4 H(+)(out). Component of the cytochrome c oxidase, the last enzyme in the mitochondrial electron transport chain which drives oxidative phosphorylation. The respiratory chain contains 3 multisubunit complexes succinate dehydrogenase (complex II, CII), ubiquinol-cytochrome c oxidoreductase (cytochrome b-c1 complex, complex III, CIII) and cytochrome c oxidase (complex IV, CIV), that cooperate to transfer electrons derived from NADH and succinate to molecular oxygen, creating an electrochemical gradient over the inner membrane that drives transmembrane transport and the ATP synthase. Cytochrome c oxidase is the component of the respiratory chain that catalyzes the reduction of oxygen to water. Electrons originating from reduced cytochrome c in the intermembrane space (IMS) are transferred via the dinuclear copper A center (CU(A)) of subunit 2 and heme A of subunit 1 to the active site in subunit 1, a binuclear center (BNC) formed by heme A3 and copper B (CU(B)). The BNC reduces molecular oxygen to 2 water molecules using 4 electrons from cytochrome c in the IMS and 4 protons from the mitochondrial matrix. This Vanderwaltozyma polyspora (strain ATCC 22028 / DSM 70294 / BCRC 21397 / CBS 2163 / NBRC 10782 / NRRL Y-8283 / UCD 57-17) (Kluyveromyces polysporus) protein is Cytochrome c oxidase subunit 3 (COX3).